The primary structure comprises 248 residues: Probable transcriptional regulatory protein Mrad2831_3553 (248 aa).

The protein belongs to the TACO1 family.

The protein resides in the cytoplasm. The polypeptide is Probable transcriptional regulatory protein Mrad2831_3553 (Methylobacterium radiotolerans (strain ATCC 27329 / DSM 1819 / JCM 2831 / NBRC 15690 / NCIMB 10815 / 0-1)).